The primary structure comprises 1093 residues: Electroneutral sodium bicarbonate exchanger 1 (1093 aa).

Disordered regions lie at residues 1–25 and 55–95; these read MPAAGSNEPDGVLSYQRPDEEAVVD and PLGR…HDTP. The Extracellular portion of the chain corresponds to 1 to 478; that stretch reads MPAAGSNEPD…DYRDALSLQC (478 aa). The span at 59 to 77 shows a compositional bias: basic residues; the sequence is QSHRHHRTHGQKHRRRGRG. Residues Phe-167 and Leu-169 each coordinate Zn(2+). A VTVLP; mediates dimerization motif is present at residues 340–344; the sequence is LFILL. The chain crosses the membrane as a helical span at residues 479–499; sequence LASFLFLYCACMSPVITFGGL. The Cytoplasmic segment spans residues 500–523; that stretch reads LGEATEGRISAIESLFGASMTGIA. Residues 524–544 form a helical membrane-spanning segment; it reads YSLFAGQALTILGSTGPVLVF. Residues 545–565 lie on the Extracellular side of the membrane; the sequence is EKILFKFCKDYALSYLSLRAC. Residues 566–586 form a helical membrane-spanning segment; sequence IGLWTAFLCIVLVATDASSLV. The Cytoplasmic segment spans residues 587 to 595; sequence CYITRFTEE. The chain crosses the membrane as a helical span at residues 596–616; sequence AFASLICIIFIYEAIEKLIHL. Residues 617-687 lie on the Extracellular side of the membrane; that stretch reads AETYPIHMHS…EFMGSACGHH (71 aa). 2 cysteine pairs are disulfide-bonded: Cys-636–Cys-684 and Cys-638–Cys-672. Asn-646 carries N-linked (GlcNAc) asparagine glycosylation. Residues 688 to 708 form a helical membrane-spanning segment; that stretch reads GPYTPDVLFWSCILFFTTFIL. Residues 709 to 731 lie on the Cytoplasmic side of the membrane; it reads SSTLKTFKTSRYFPTRVRSMVSD. A helical transmembrane segment spans residues 732–752; the sequence is FAVFLTIFTMVIIDFLIGVPS. Topologically, residues 753-778 are extracellular; sequence PKLQVPSVFKPTRDDRGWIINPIGPN. Residues 779-799 traverse the membrane as a helical segment; that stretch reads PWWTVIAAIIPALLCTILIFM. Residues 800–824 lie on the Cytoplasmic side of the membrane; it reads DQQITAVIINRKEHKLKKGCGYHLD. Residues 825 to 845 form a helical membrane-spanning segment; sequence LLMVAIMLGVCSIMGLPWFVA. Residues 846–881 are Extracellular-facing; sequence ATVLSITHVNSLKLESECSAPGEQPKFLGIREQRVT. The chain crosses the membrane as a helical span at residues 882 to 902; sequence GLMIFVLMGCSVFMTAILKFI. Residues 903–904 lie on the Cytoplasmic side of the membrane; that stretch reads PM. A helical transmembrane segment spans residues 905 to 925; it reads PVLYGVFLYMGVSSLQGIQFF. The Extracellular segment spans residues 926 to 962; that stretch reads DRLKLFGMPAKHQPDFIYLRHVPLRKVHLFTLIQLTC. The helical transmembrane segment at 963-983 threads the bilayer; it reads LVLLWVIKASPAAIVFPMMVL. Residues 984 to 1093 are Cytoplasmic-facing; the sequence is ALVFVRKVMD…GNAKEKSLFN (110 aa). Positions 1010–1036 form a coiled coil; that stretch reads ESKKKKLDDAKKKAKEEEEAEKMLEIG.

This sequence belongs to the anion exchanger (TC 2.A.31) family. Homodimer. In terms of tissue distribution, expressed in the pyramidal cells of the hippocampus (at protein level). Highly expressed in all major regions of the brain, spinal column and in testis, and moderate levels in trachea, thyroid and medulla region of kidney. Low expression levels observed in pancreas and kidney cortex. Expressed in the brain. As to expression, expressed in the brain, heart and kidney.

The protein resides in the apical cell membrane. It localises to the basolateral cell membrane. Its subcellular location is the cytoplasmic vesicle. It is found in the secretory vesicle. The protein localises to the synaptic vesicle membrane. The protein resides in the cell membrane. It catalyses the reaction 2 hydrogencarbonate(out) + chloride(in) + Na(+)(out) = 2 hydrogencarbonate(in) + chloride(out) + Na(+)(in). Activity is inhibited by 4,4'-Di-isothiocyanatostilbene-2,2'-disulfonic acid (DIDS - an inhibitor of several anion channels and transporters). Its activity is regulated as follows. Activity is inhibited by 4,4'-Di-isothiocyanatostilbene-2,2'-disulfonic acid (DIDS - an inhibitor of several anion channels and transporters). Zinc-binding negatively regulates its activity. Functionally, mediates electroneutral sodium- and carbonate-dependent chloride-HCO3(-) exchange with a Na(+):HCO3(-) stoichiometry of 2:1. Plays a major role in pH regulation in neurons. Mediates sodium reabsorption in the renal cortical collecting ducts. The sequence is that of Electroneutral sodium bicarbonate exchanger 1 from Homo sapiens (Human).